Reading from the N-terminus, the 1030-residue chain is MPKDTSISSILVIGSGPIIIGQAAEFDYSGTQGCIALKEEGYRVILVNSNPATIMTDEAFADEIYFEPLTAESLTAIIKKERPDGLLANLGGQTALNLAVELEETGVLKEHGVKLLGTSVETIQKGEDREKFRSLMNELKQPVPESEIVDNEADALHFAESIGFPVIIRPAYTLGGKGGGIAPDKEAFTAMIKQALLASPINQCLVEKSIAGFKEIEYEVMRDSNNTCITVCNMENIDPVGVHTGDSIVVAPSQTLTDEDYQMLRTASLTIISALDVVGGCNIQFALDPFSKQYYVIEVNPRVSRSSALASKATGYPIAKMAAKLAVGYTLDELKNPLTGSTYASFEPALDYVIVKFPRWPFDKFKNADRKLGTKMKATGEVMAIERNLEAAIQKAAASLELKNIGTHLPELSGLSIDTLWDLAITPDDRRFFVVMELLSRSVSIDDIHEKTKIDPFFLHTFDNIIKLENRLMEAGSDLSFELLKKAKEKGFSDATIASLISKTEEEVRALRKEMGITPSFKIVDTCAAEFDAKTNYFYSTYFGETDGDISRKEKKRALIIGSGPIRIGQGVEFDYSAVHGVLTLQELGFETIMINNNPETVSTDYEIADRLYFEPMTTEHIVNVAEQENIDFAIVQFGGQTAINAAEALEKAGITLLGTSFQTLDVLEDRDQFYQLLDELGLKHAKGEIAYTKEEAASKASEIGYPVLIRPSYVIGGMGMIIVDSQAQLSQLLNDEDSMPYPILIDQYVSGKEVEIDLISDGEEVFIPTYTEHIERAGVHSGDSFAILPGPSITSGLQQGMKDAAQKIARKLSFKGIMNIQFVIDNGNILVLEVNPRASRTVPVVSKVMGVPMIPLATRLLAGASLKDLNPAVQNHHGVAVKFPVFSSHAIQDVDVKLGPEMKSTGEGMCVAYDSNSALKKIYTRVWSQKGSIYLQNVPEDVKELAENAGFTIHEGTFASWMEQEGNSLHINLSGSEEARKERLEAMTHGIPVFTEEETVRAFLQSGSGHPQPVSLKDLYKKEVASCTQ.

The segment at M1–E401 is carboxyphosphate synthetic domain. ATP contacts are provided by R129, R169, G175, G176, K208, I210, E215, G241, V242, H243, Q284, and E298. The ATP-grasp 1 domain maps to R133–V327. 3 residues coordinate Mg(2+): Q284, E298, and N300. Residues Q284, E298, and N300 each contribute to the Mn(2+) site. The segment at L402–G548 is oligomerization domain. The carbamoyl phosphate synthetic domain stretch occupies residues D549–W928. The region spanning Y675–A863 is the ATP-grasp 2 domain. Residues R711, Q748, V750, E754, G779, V780, H781, S782, Q822, and E834 each contribute to the ATP site. Residues Q822, E834, and N836 each contribute to the Mg(2+) site. Positions 822, 834, and 836 each coordinate Mn(2+). One can recognise an MGS-like domain in the interval T925 to S1027. Positions S929 to Q1030 are allosteric domain.

It belongs to the CarB family. In terms of assembly, composed of two chains; the small (or glutamine) chain promotes the hydrolysis of glutamine to ammonia, which is used by the large (or ammonia) chain to synthesize carbamoyl phosphate. Tetramer of heterodimers (alpha,beta)4. Mg(2+) is required as a cofactor. Mn(2+) serves as cofactor.

It catalyses the reaction hydrogencarbonate + L-glutamine + 2 ATP + H2O = carbamoyl phosphate + L-glutamate + 2 ADP + phosphate + 2 H(+). The catalysed reaction is hydrogencarbonate + NH4(+) + 2 ATP = carbamoyl phosphate + 2 ADP + phosphate + 2 H(+). It functions in the pathway amino-acid biosynthesis; L-arginine biosynthesis; carbamoyl phosphate from bicarbonate: step 1/1. In terms of biological role, large subunit of the glutamine-dependent carbamoyl phosphate synthetase (CPSase). CPSase catalyzes the formation of carbamoyl phosphate from the ammonia moiety of glutamine, carbonate, and phosphate donated by ATP, constituting the first step of the biosynthetic pathway leading to arginine and/or urea. The large subunit (synthetase) binds the substrates ammonia (free or transferred from glutamine from the small subunit), hydrogencarbonate and ATP and carries out an ATP-coupled ligase reaction, activating hydrogencarbonate by forming carboxy phosphate which reacts with ammonia to form carbamoyl phosphate. The chain is Carbamoyl phosphate synthase arginine-specific large chain from Bacillus subtilis (strain 168).